A 216-amino-acid polypeptide reads, in one-letter code: 3-keto-L-gulonate-6-phosphate decarboxylase UlaD (216 aa).

Aspartate 11 contributes to the substrate binding site. Residues glutamate 33 and aspartate 62 each contribute to the Mg(2+) site. Residue arginine 192 coordinates substrate.

This sequence belongs to the HPS/KGPDC family. KGPDC subfamily. In terms of assembly, homodimer. Mg(2+) serves as cofactor.

The catalysed reaction is 3-dehydro-L-gulonate 6-phosphate + H(+) = L-xylulose 5-phosphate + CO2. It functions in the pathway cofactor degradation; L-ascorbate degradation; D-xylulose 5-phosphate from L-ascorbate: step 2/4. Its function is as follows. Catalyzes the decarboxylation of 3-keto-L-gulonate-6-P into L-xylulose-5-P. Is involved in the anaerobic L-ascorbate utilization. This is 3-keto-L-gulonate-6-phosphate decarboxylase UlaD from Escherichia coli O127:H6 (strain E2348/69 / EPEC).